The following is a 469-amino-acid chain: 6-phosphogluconate dehydrogenase, NADP(+)-dependent, decarboxylating (469 aa).

NADP(+)-binding positions include 10–15 (GLAVMG), 33–35 (NRS), 74–76 (VKA), and Asn102. Residues Asn102 and 128–130 (SGG) each bind substrate. The active-site Proton acceptor is Lys182. Substrate is bound at residue 185 to 186 (HN). Glu189 (proton donor) is an active-site residue. Residues Tyr190, Lys260, Arg287, Arg446, and His452 each coordinate substrate.

This sequence belongs to the 6-phosphogluconate dehydrogenase family. As to quaternary structure, homodimer.

The enzyme catalyses 6-phospho-D-gluconate + NADP(+) = D-ribulose 5-phosphate + CO2 + NADPH. It functions in the pathway carbohydrate degradation; pentose phosphate pathway; D-ribulose 5-phosphate from D-glucose 6-phosphate (oxidative stage): step 3/3. Catalyzes the oxidative decarboxylation of 6-phosphogluconate to ribulose 5-phosphate and CO(2), with concomitant reduction of NADP to NADPH. Is the predominant 6-P-gluconate dehydrogenase isoenzyme in B.subtilis during growth on glucose and gluconate. The chain is 6-phosphogluconate dehydrogenase, NADP(+)-dependent, decarboxylating (gndA) from Bacillus subtilis (strain 168).